Reading from the N-terminus, the 507-residue chain is NADH-quinone oxidoreductase subunit N (507 aa).

The next 15 membrane-spanning stretches (helical) occupy residues 17–37 (LVTL…MLTA), 46–66 (VMIL…LSQG), 81–101 (YALF…ILCY), 113–133 (ALYI…ASSH), 134–154 (FASF…LIAY), 168–188 (YLIL…LVYA), 190–210 (LGTM…AALE), 211–231 (LYGL…LALV), 245–265 (PVPI…VLLL), 279–299 (ITFA…LLAL), 307–327 (ILAY…LAFD), 334–354 (VAYF…VVTV), 392–412 (AGVF…MGFI), 425–445 (SLWM…FYYM), and 478–498 (LAAL…LIGV).

This sequence belongs to the complex I subunit 2 family. As to quaternary structure, NDH-1 is composed of 14 different subunits. Subunits NuoA, H, J, K, L, M, N constitute the membrane sector of the complex.

It is found in the cell inner membrane. The enzyme catalyses a quinone + NADH + 5 H(+)(in) = a quinol + NAD(+) + 4 H(+)(out). In terms of biological role, NDH-1 shuttles electrons from NADH, via FMN and iron-sulfur (Fe-S) centers, to quinones in the respiratory chain. The immediate electron acceptor for the enzyme in this species is believed to be ubiquinone. Couples the redox reaction to proton translocation (for every two electrons transferred, four hydrogen ions are translocated across the cytoplasmic membrane), and thus conserves the redox energy in a proton gradient. The protein is NADH-quinone oxidoreductase subunit N of Nitrosospira multiformis (strain ATCC 25196 / NCIMB 11849 / C 71).